The chain runs to 173 residues: Photosystem I assembly protein Ycf3 (173 aa).

TPR repeat units follow at residues 35–68, 72–105, and 120–153; these read AYIYYRDGLAAQNNGDYSEALEYYKESLLLEENK, GETLKNMAIIYMSNGEEDLSIETYEKALVENPKQ, and GRYAEQNGDLDQRDIWYDKAAEVWSKAVRLYPGG.

It belongs to the Ycf3 family.

Its subcellular location is the cellular thylakoid membrane. Its function is as follows. Essential for the assembly of the photosystem I (PSI) complex. May act as a chaperone-like factor to guide the assembly of the PSI subunits. The chain is Photosystem I assembly protein Ycf3 from Prochlorococcus marinus (strain MIT 9215).